The following is a 325-amino-acid chain: BES1/BZR1 homolog protein 4 (325 aa).

The disordered stretch occupies residues 1-21 (MTSGTRMPTWRERENNKRRER). Residues 6-89 (RMPTWREREN…RMEIGGGSAT (84 aa)) are required for DNA-binding. Residue threonine 169 is modified to Phosphothreonine. The segment at 304–325 (ERIHEESGSDDLELTLGNSSTR) is disordered.

This sequence belongs to the BZR/LAT61 family. Post-translationally, phosphorylated. Phosphorylation increases protein degradation.

The sequence is that of BES1/BZR1 homolog protein 4 (BEH4) from Arabidopsis thaliana (Mouse-ear cress).